A 38-amino-acid polypeptide reads, in one-letter code: Potassium channel toxin alpha-KTx 3.12 (38 aa).

3 cysteine pairs are disulfide-bonded: cysteine 8–cysteine 28, cysteine 14–cysteine 33, and cysteine 18–cysteine 35. Residue lysine 38 is modified to Lysine amide.

This sequence belongs to the short scorpion toxin superfamily. Potassium channel inhibitor family. Alpha-KTx 03 subfamily. Expressed by the venom gland.

Its subcellular location is the secreted. Its function is as follows. Potent inhibitor of voltage-dependent potassium channels, with a preference for Kv1.3/KCNA3 versus Kv1.2/KCNA2. This is Potassium channel toxin alpha-KTx 3.12 from Androctonus amoreuxi (African fattail scorpion).